The sequence spans 764 residues: MVTTHNLGFPRIGAQRELKFGLERYWKGESSRDELKALGAELRERHWNDQRDLDLAPIGDFSFYDQVLDMSFTLGNLPKRVQGFHGDVLDNYFRVARGRSAQAADEHATCCGGVSAGEMTKWFDTNYHYIVPEFHADTNFSLDPSCLLQQLAEARALGVAGKPVILGPVTYLWLGKAKDDSDRLALLPKLLPVYGALLDTLTAQGVEWVQIDEPILVTELDAEWRQALRTAYAALETRRIKVLLATYFGALGDNLTLAASLPVDGLHVDAINARDEVDALVRELPADRVLSVGAINGRNIWKTDLNATLDWLEPLAKQLGERLWIAPSCSLLHVPVDLASEQKLDPEIRSWLAFALQKLDELNVLATALNEGRDKVADALAANAAAIDSRRRSPRVNNPAVKAALARIDAQLGNRASPYTQRAPKQSARLNLPAFPTTTIGSFPQTADIRQARRQFKSGALDEAGYRAAMQAEIERSVREQESLELDVLVHGEAERNDMVEYFGEQLDGYAFSQFGWVQSYGSRCVKPPILFGDISRPKAMTVEWITYAQSLTNKPMKGMLTGPVTILNWSFVRDDQPRSVSCYQLALAIRDEVLDLEKAGVRVIQIDEAALREGLPLRRAQWGEYLKWAVEAFRITANGVQDDTQIHTHMCYSEFNDIIASIADMDADVITIETSRSDMELLDAFDSFRYPNEIGPGVYDIHSPNIPTQDHIVGLMKKAAERIPAERLWVNPDCGLKTRQWAEVIPALTNMVAAAKTLRNQVQ.

5-methyltetrahydropteroyltri-L-glutamate contacts are provided by residues 16-19 and K121; that span reads RELK. Residues 440 to 442 and E493 contribute to the L-homocysteine site; that span reads IGS. L-methionine-binding positions include 440–442 and E493; that span reads IGS. Residues 524-525 and W570 contribute to the 5-methyltetrahydropteroyltri-L-glutamate site; that span reads RC. Residue D608 participates in L-homocysteine binding. Residue D608 participates in L-methionine binding. E614 is a 5-methyltetrahydropteroyltri-L-glutamate binding site. Positions 650, 652, and 674 each coordinate Zn(2+). The Proton donor role is filled by H703. C735 is a Zn(2+) binding site.

This sequence belongs to the vitamin-B12 independent methionine synthase family. Zn(2+) serves as cofactor.

It carries out the reaction 5-methyltetrahydropteroyltri-L-glutamate + L-homocysteine = tetrahydropteroyltri-L-glutamate + L-methionine. It participates in amino-acid biosynthesis; L-methionine biosynthesis via de novo pathway; L-methionine from L-homocysteine (MetE route): step 1/1. Its function is as follows. Catalyzes the transfer of a methyl group from 5-methyltetrahydrofolate to homocysteine resulting in methionine formation. This is 5-methyltetrahydropteroyltriglutamate--homocysteine methyltransferase from Burkholderia ambifaria (strain MC40-6).